We begin with the raw amino-acid sequence, 70 residues long: Translational regulator CsrA (70 aa).

The protein belongs to the CsrA/RsmA family. In terms of assembly, homodimer; the beta-strands of each monomer intercalate to form a hydrophobic core, while the alpha-helices form wings that extend away from the core.

The protein localises to the cytoplasm. A translational regulator that binds mRNA to regulate translation initiation and/or mRNA stability. Usually binds in the 5'-UTR at or near the Shine-Dalgarno sequence preventing ribosome-binding, thus repressing translation. Its main target seems to be the major flagellin gene, while its function is anatagonized by FliW. This Rhodopirellula baltica (strain DSM 10527 / NCIMB 13988 / SH1) protein is Translational regulator CsrA.